Here is a 231-residue protein sequence, read N- to C-terminus: 2,3-bisphosphoglycerate-dependent phosphoglycerate mutase (231 aa).

Residues 8 to 15, 21 to 22, Arg-60, 87 to 90, Lys-98, 114 to 115, and 183 to 184 contribute to the substrate site; these read RHGESEWN, TG, ERHY, RR, and GN. Residue His-9 is the Tele-phosphohistidine intermediate of the active site. Catalysis depends on Glu-87, which acts as the Proton donor/acceptor.

Belongs to the phosphoglycerate mutase family. BPG-dependent PGAM subfamily.

It catalyses the reaction (2R)-2-phosphoglycerate = (2R)-3-phosphoglycerate. Its pathway is carbohydrate degradation; glycolysis; pyruvate from D-glyceraldehyde 3-phosphate: step 3/5. In terms of biological role, catalyzes the interconversion of 2-phosphoglycerate and 3-phosphoglycerate. The chain is 2,3-bisphosphoglycerate-dependent phosphoglycerate mutase from Streptococcus equi subsp. zooepidemicus (strain H70).